A 101-amino-acid polypeptide reads, in one-letter code: Secreted enzymes activator (101 aa).

Positions 1–10 (MSRRRRRASA) are enriched in basic residues. 2 disordered regions span residues 1-26 (MSRR…PYGS) and 45-101 (TRLA…NGRG). Residues 45–60 (TRLAASSRASRAAVGS) are compositionally biased toward low complexity. Residues 55–74 (RAAVGSFDGAKNRPASSRRQ) constitute a DNA-binding region (H-T-H motif).

Its function is as follows. Increases the production of several extracellular enzymes, like alkaline phosphatase, amylase, protease or lipase. When present in high concentrations, delays the production of pigments and sporulation. The protein is Secreted enzymes activator (saf) of Streptomyces griseus.